Here is a 528-residue protein sequence, read N- to C-terminus: UDP-glucuronosyltransferase 2A2 (528 aa).

An N-terminal signal peptide occupies residues 1–21 (MIKKVLQLLIFHLTLAEIVLS). Residues 22-494 (GNVVVWPTDG…FQYHSLDVIG (473 aa)) are Extracellular-facing. N-linked (GlcNAc...) asparagine glycosylation is found at asparagine 48 and asparagine 314. A helical membrane pass occupies residues 495–515 (FLLACVASAILLVAKCCLFIF). The Cytoplasmic portion of the chain corresponds to 516 to 528 (QKVGKTGKKKKRD).

It belongs to the UDP-glycosyltransferase family.

The protein localises to the membrane. It carries out the reaction glucuronate acceptor + UDP-alpha-D-glucuronate = acceptor beta-D-glucuronoside + UDP + H(+). It catalyses the reaction 17alpha-estradiol + UDP-alpha-D-glucuronate = 17alpha-estradiol 3-O-(beta-D-glucuronate) + UDP + H(+). The enzyme catalyses 17beta-estradiol + UDP-alpha-D-glucuronate = 17beta-estradiol 3-O-(beta-D-glucuronate) + UDP + H(+). The catalysed reaction is chenodeoxycholate + UDP-alpha-D-glucuronate = chenodeoxycholoyl-24-O-(beta-D-glucuronate) + UDP. It carries out the reaction lithocholate + UDP-alpha-D-glucuronate = lithocholoyl-24-O-(beta-D-glucuronate) + UDP. It catalyses the reaction deoxycholate + UDP-alpha-D-glucuronate = deoxycholoyl-24-O-(beta-D-glucuronate) + UDP. The enzyme catalyses hyocholate + UDP-alpha-D-glucuronate = hyocholoyl-24-O-(beta-D-glucuronate) + UDP. The catalysed reaction is hyodeoxycholate + UDP-alpha-D-glucuronate = hyodeoxycholate 6-O-(beta-D-glucuronate) + UDP + H(+). In terms of biological role, UDP-glucuronosyltransferase (UGT) that catalyzes phase II biotransformation reactions in which lipophilic substrates are conjugated with glucuronic acid to increase the metabolite's water solubility, thereby facilitating excretion into either the urine or bile. Essential for the elimination and detoxification of drugs, xenobiotics and endogenous compounds. Catalyzes the glucuronidation of endogenous estrogen hormone estradiol. Contributes to bile acid (BA) detoxification by catalyzing the glucuronidation of BA substrates, which are natural detergents for dietary lipids absorption. Potential role in detoxification of toxic waste compounds in the amniotic fluid before birth, and air-born chemical after birth. This Mus musculus (Mouse) protein is UDP-glucuronosyltransferase 2A2.